Here is a 461-residue protein sequence, read N- to C-terminus: Cysteine--tRNA ligase (461 aa).

Cysteine 30 contributes to the Zn(2+) binding site. The short motif at 32–42 is the 'HIGH' region element; that stretch reads VTIYDLCHIGH. The Zn(2+) site is built by cysteine 211, histidine 236, and glutamate 240. The short motif at 268-272 is the 'KMSKS' region element; it reads KMSKS. Lysine 271 lines the ATP pocket.

Belongs to the class-I aminoacyl-tRNA synthetase family. As to quaternary structure, monomer. Zn(2+) is required as a cofactor.

Its subcellular location is the cytoplasm. The enzyme catalyses tRNA(Cys) + L-cysteine + ATP = L-cysteinyl-tRNA(Cys) + AMP + diphosphate. This Shewanella putrefaciens (strain CN-32 / ATCC BAA-453) protein is Cysteine--tRNA ligase.